Here is a 312-residue protein sequence, read N- to C-terminus: Borealin-2 (312 aa).

The segment covering 1–10 (MPPRKAPAKR) has biased composition (basic residues). The segment at 1-26 (MPPRKAPAKRRSTDSGVERDRGALSQ) is disordered. Residues 11 to 26 (RSTDSGVERDRGALSQ) are compositionally biased toward basic and acidic residues.

The protein belongs to the borealin family. Component of the CPC complex.

The protein localises to the nucleus. It localises to the chromosome. It is found in the centromere. Its function is as follows. Component of the chromosomal passenger complex (CPC), a complex that acts as a key regulator of mitosis. The CPC complex has essential functions at the centromere in ensuring correct chromosome alignment and segregation and is required for chromatin-induced microtubule stabilization and spindle assembly. This Gallus gallus (Chicken) protein is Borealin-2.